Reading from the N-terminus, the 339-residue chain is Phenylalanine--tRNA ligase alpha subunit (339 aa).

Glu-250 is a Mg(2+) binding site.

It belongs to the class-II aminoacyl-tRNA synthetase family. Phe-tRNA synthetase alpha subunit type 1 subfamily. Tetramer of two alpha and two beta subunits. Mg(2+) serves as cofactor.

The protein resides in the cytoplasm. It carries out the reaction tRNA(Phe) + L-phenylalanine + ATP = L-phenylalanyl-tRNA(Phe) + AMP + diphosphate + H(+). The sequence is that of Phenylalanine--tRNA ligase alpha subunit from Flavobacterium johnsoniae (strain ATCC 17061 / DSM 2064 / JCM 8514 / BCRC 14874 / CCUG 350202 / NBRC 14942 / NCIMB 11054 / UW101) (Cytophaga johnsonae).